The sequence spans 922 residues: Probable dipeptidyl-aminopeptidase B (922 aa).

Basic and acidic residues predominate over residues 1–16 (MATEKGHSRDDEERVP). A disordered region spans residues 1–21 (MATEKGHSRDDEERVPLTRGS). Over 1–99 (MATEKGHSRD…KPMHKSVKIA (99 aa)) the chain is Cytoplasmic. A helical; Signal-anchor for type II membrane protein membrane pass occupies residues 100–120 (LWSLLFLSLGGWSLAFVLFIF). Residues 121–922 (RSHDTYQTPI…AGLYKFKHLC (802 aa)) lie on the Vacuolar side of the membrane. Residues Asn-135, Asn-200, Asn-351, and Asn-574 are each glycosylated (N-linked (GlcNAc...) asparagine). Ser-756 functions as the Charge relay system in the catalytic mechanism. N-linked (GlcNAc...) asparagine glycosylation occurs at Asn-815. Catalysis depends on charge relay system residues Asp-833 and His-866. An N-linked (GlcNAc...) asparagine glycan is attached at Asn-902.

Belongs to the peptidase S9B family.

Its subcellular location is the vacuole membrane. The enzyme catalyses Release of an N-terminal dipeptide, Xaa-Yaa-|-Zaa-, from a polypeptide, preferentially when Yaa is Pro, provided Zaa is neither Pro nor hydroxyproline.. In terms of biological role, type IV dipeptidyl-peptidase which removes N-terminal dipeptides sequentially from polypeptides having unsubstituted N-termini provided that the penultimate residue is proline. The sequence is that of Probable dipeptidyl-aminopeptidase B (DAPB) from Ajellomyces capsulatus (strain NAm1 / WU24) (Darling's disease fungus).